A 144-amino-acid polypeptide reads, in one-letter code: Large ribosomal subunit protein uL14 (144 aa).

The protein belongs to the universal ribosomal protein uL14 family. In terms of assembly, part of the 50S ribosomal subunit. Forms a cluster with proteins L3 and L24e, part of which may contact the 16S rRNA in 2 intersubunit bridges.

Binds to 23S rRNA. Forms part of two intersubunit bridges in the 70S ribosome. The protein is Large ribosomal subunit protein uL14 of Cenarchaeum symbiosum (strain A).